The following is a 325-amino-acid chain: Mitochondrial amidoxime-reducing component 1 (325 aa).

Residues 1-16 (MDLKEAFATIFDQNRK) are Mitochondrial matrix-facing. Residues 17 to 36 (VALYAAGTTVAVLGLGLVFK) traverse the membrane as a helical; Signal-anchor for type II membrane protein segment. The Cytoplasmic portion of the chain corresponds to 37-325 (YMRREEKLTR…VGEPVYKITY (289 aa)). Positions 59, 60, and 84 each coordinate Mo-molybdopterin. Residues 85–175 (HWLVITEDGH…ADKPVRLVHY (91 aa)) are MOSC N-terminal region. An MOSC domain is found at 179–323 (LKPQRPHEKE…LHVGEPVYKI (145 aa)). Mo-molybdopterin-binding residues include arginine 230, arginine 264, cysteine 265, and tyrosine 305.

Requires Mo-molybdopterin as cofactor.

The protein localises to the mitochondrion outer membrane. The protein resides in the membrane. The catalysed reaction is N(omega)-hydroxy-L-arginine + 2 Fe(II)-[cytochrome b5] + 2 H(+) = L-arginine + 2 Fe(III)-[cytochrome b5] + H2O. In terms of biological role, catalyzes the reduction of N-oxygenated molecules, acting as a counterpart of cytochrome P450 and flavin-containing monooxygenases in metabolic cycles. As a component of prodrug-converting system, reduces a multitude of N-hydroxylated prodrugs particularly amidoximes, leading to increased drug bioavailability. May be involved in mitochondrial N(omega)-hydroxy-L-arginine (NOHA) reduction, regulating endogenous nitric oxide levels and biosynthesis. Postulated to cleave the N-OH bond of N-hydroxylated substrates in concert with electron transfer from NADH to cytochrome b5 reductase then to cytochrome b5, the ultimate electron donor that primes the active site for substrate reduction. The sequence is that of Mitochondrial amidoxime-reducing component 1 (mtarc1) from Danio rerio (Zebrafish).